We begin with the raw amino-acid sequence, 154 residues long: MAARLCCQLDPARDVLCLRPVGAESRGRPFSGPLGTLSSPSPSAVSTDHGAHLSLRGLPVCAFSSAGPCALRFTSARRMETTVNAHQFLPKVLHKRTLGLSVMSTTDLEAYFKDCLFKDWEESGEEIRLMIFVLGGCRHKLVCAPAPCNFFTSA.

Positions 68–117 are mitochondrial targeting sequence; that stretch reads PCALRFTSARRMETTVNAHQFLPKVLHKRTLGLSVMSTTDLEAYFKDCLF.

Belongs to the orthohepadnavirus protein X family. As to quaternary structure, may form homodimer. May interact with host CEBPA, CFLAR, CREB1, DDB1, E4F1, HBXIP, HSPD1/HSP60, NFKBIA, POLR2E and SMAD4. Interacts with host SMC5-SMC6 complex and induces its degradation. Interacts with host TRPC4AP; leading to prevent ubiquitination of TRPC4AP. Interacts with host PLSCR1; this interaction promotes ubiquitination and degradation of HBx and impairs HBx-mediated cell proliferation. A fraction may be phosphorylated in insect cells and HepG2 cells, a human hepatoblastoma cell line. Phosphorylated in vitro by host protein kinase C or mitogen-activated protein kinase. N-acetylated in insect cells.

The protein resides in the host cytoplasm. It localises to the host nucleus. It is found in the host mitochondrion. In terms of biological role, multifunctional protein that plays a role in silencing host antiviral defenses and promoting viral transcription. Does not seem to be essential for HBV infection. May be directly involved in development of cirrhosis and liver cancer (hepatocellular carcinoma). Most of cytosolic activities involve modulation of cytosolic calcium. The effect on apoptosis is controversial depending on the cell types in which the studies have been conducted. May induce apoptosis by localizing in mitochondria and causing loss of mitochondrial membrane potential. May also modulate apoptosis by binding host CFLAR, a key regulator of the death-inducing signaling complex (DISC). Promotes viral transcription by using the host E3 ubiquitin ligase DDB1 to target the SMC5-SMC6 complex to proteasomal degradation. This host complex would otherwise bind to viral episomal DNA, and prevents its transcription. Moderately stimulates transcription of many different viral and cellular transcription elements. Promoters and enhancers stimulated by HBx contain DNA binding sites for NF-kappa-B, AP-1, AP-2, c-EBP, ATF/CREB, or the calcium-activated factor NF-AT. This chain is Protein X, found in Hepatitis B virus genotype D (isolate France/alpha1/1989) (HBV-D).